A 467-amino-acid chain; its full sequence is Coiled-coil domain-containing protein 71 (467 aa).

Residues P81–T105 form a disordered region. The segment covering A88–T105 has biased composition (low complexity). S129 is subject to Phosphoserine. 2 disordered regions span residues K211–T280 and V349–L416. The segment covering G253–P265 has biased composition (polar residues). The stretch at K279 to Q359 forms a coiled coil. The segment covering V349–K380 has biased composition (basic residues). Over residues R392–P401 the composition is skewed to basic and acidic residues.

In Homo sapiens (Human), this protein is Coiled-coil domain-containing protein 71 (CCDC71).